We begin with the raw amino-acid sequence, 345 residues long: Neuropeptide receptor 15 (345 aa).

The Extracellular portion of the chain corresponds to 1-11 (MSVAVGIPYVC). A helical transmembrane segment spans residues 12–32 (FFIILSVVGIIGNVIVIYAIA). Residues 33-40 (GDRNMRKS) are Cytoplasmic-facing. The chain crosses the membrane as a helical span at residues 41–61 (VMNILLLNLAVADLANLIFTI). Residues 62–90 (PEWIPPVFFGSTDWLFPSFLCPVCRYLEC) lie on the Extracellular side of the membrane. A disulfide bond links C82 and C171. A helical membrane pass occupies residues 91–111 (VFLFASISTQMIVCIERYIAI). Over 112-125 (VLPMQARQLCSRRN) the chain is Cytoplasmic. Residues 126-146 (VLITVLVDWIFVACFASPYAV) form a helical membrane-spanning segment. The Extracellular segment spans residues 147-187 (WHSVKTKDRNTNSLRFKLFQLSATCSNTVGKSTWWQGYKLT). A helical membrane pass occupies residues 188–208 (EFLAFYFVPCFIITVVYTKVA). Over 209 to 246 (KCLWCKDPTLQCETRSCLDNKSSSRSSDALRTRRNVVK) the chain is Cytoplasmic. Residues 247–267 (MLIACVAVYFVCYSPIQVIFL) form a helical membrane-spanning segment. Over 268–281 (SKAVLNVTIHPPYD) the chain is Extracellular. Residues 282-304 (FILLMNALAMTCSASNPLLYTLF) form a helical membrane-spanning segment. Residues 305–345 (SQKFRRRLRDVLYCPSDVENETKTYYSINNTSIVGPRASFN) are Cytoplasmic-facing.

This sequence belongs to the G-protein coupled receptor 1 family. In terms of tissue distribution, expressed in pharyngeal muscle and AWC, ASG, ASE, ASI, and ASJ sensory neurons. Expressed in ASI neuron. Expressed in AFD neurons and in AVK interneuron.

It localises to the cell membrane. Functionally, probable receptor for neuropeptide ligand nlp-8 that plays a role in octopamine signaling and specifically, the octopamine inhibition of aversion responses in olfactory sensory neurons. Plays a crucial role in daf-7 expression. Acts in concert with gpa-4 to activate TGF-beta-like daf-7 secretion in the ASI neuron, thereby promoting larval development and inhibition of dauer diapause. Suppresses immune response against pathogenic infection by inhibiting transcription regulators elt-2 and hlh-30 in ASJ neuron. Promotes pathogen avoidance behavior via intestinal gon-2, independent of aerotaxis. This chain is Neuropeptide receptor 15 (npr-15), found in Caenorhabditis elegans.